Here is a 464-residue protein sequence, read N- to C-terminus: MGKRLLDKLWEKHVVTTNENGLDLLYIDLHLVHEVTSPQAFEGLRLTNRKVRRPDLTFATMDHNIPTKDVWNITDRIAKQQLDTLRENCKQFQVPLADIGDEEQGIVHVIGPELGLTQPGKTIVCGDSHTATHGAFGALAFGIGTSEVEHVLATQTLWQRKPKAMGIELKGKLQKGVYAKDIILHLLSKYGVAVGTGYVMEFYGETIGAMEMEERMTLCNMAIEGGAKAGIIAPDEKTFAYVKGRKYAPRDYETFEKKWSELYTDADAIYDLHISIDVTDLAPYVTWGTNPSMGVRIDEKLPEKHDVNDERAFSYMGLSPGQSTYDIPVQHVFIGSCTNSRLSDLEIAAAVVKGRKVKEGVRALVVPGSKRVRDAAMQKGLHHIFEEAGFEWREPGCSMCLGMNPDQVPEGEHCASTSNRNFEGRQGKGARTHLVSPAMAAAAALYGHFVDTRKESYDGAISYS.

Residues C337, C397, and C400 each coordinate [4Fe-4S] cluster.

The protein belongs to the aconitase/IPM isomerase family. LeuC type 1 subfamily. Heterodimer of LeuC and LeuD. The cofactor is [4Fe-4S] cluster.

It carries out the reaction (2R,3S)-3-isopropylmalate = (2S)-2-isopropylmalate. Its pathway is amino-acid biosynthesis; L-leucine biosynthesis; L-leucine from 3-methyl-2-oxobutanoate: step 2/4. Its function is as follows. Catalyzes the isomerization between 2-isopropylmalate and 3-isopropylmalate, via the formation of 2-isopropylmaleate. The sequence is that of 3-isopropylmalate dehydratase large subunit from Bacillus cereus (strain ZK / E33L).